Here is a 171-residue protein sequence, read N- to C-terminus: CDP-archaeol synthase (171 aa).

4 helical membrane passes run 11–31, 65–85, 129–149, and 151–171; these read VLYVIYFMLPAYMANISGLVF, VGLVVGIIQGLLSGSIIIGVI, LILVSPIVVLPIDYIILIMLI, and LVLHLSANIIAYLLGMKDVWY.

It belongs to the CDP-archaeol synthase family. The cofactor is Mg(2+).

The protein resides in the cell membrane. It catalyses the reaction 2,3-bis-O-(geranylgeranyl)-sn-glycerol 1-phosphate + CTP + H(+) = CDP-2,3-bis-O-(geranylgeranyl)-sn-glycerol + diphosphate. The protein operates within membrane lipid metabolism; glycerophospholipid metabolism. In terms of biological role, catalyzes the formation of CDP-2,3-bis-(O-geranylgeranyl)-sn-glycerol (CDP-archaeol) from 2,3-bis-(O-geranylgeranyl)-sn-glycerol 1-phosphate (DGGGP) and CTP. This reaction is the third ether-bond-formation step in the biosynthesis of archaeal membrane lipids. This is CDP-archaeol synthase from Methanothermobacter thermautotrophicus (strain ATCC 29096 / DSM 1053 / JCM 10044 / NBRC 100330 / Delta H) (Methanobacterium thermoautotrophicum).